We begin with the raw amino-acid sequence, 456 residues long: MVDVHFSDEVPPLRHLLRAGPQAQIAIEGLTYLSANLIRGIALTPTQGLARGARVIDTGQSLQVPIGEHLLGRAFNVFGDPIDGLGPLKGMKRSLHGQAVPLHQRTTGTDILVTGIKAIDLLAPLERGSKAGLFGGAGVGKTVLITEMIHNIVSRYDGVSIFCGIGERSREGEELYREMKAAGVLNNTVMVFGQMNEPPGSRFRVGHAALTMAEYFRDQAHRDVLLMIDNVFRFIQAGSEVSGLMGQLPSRVGYQPTLATELAELEERICSTAHGAITSVQAVYIPADDLTDPAAVHTFSHLSASIVLSRKRTSEGLYPAVDPLQSGSKMLTPSVVGQRHYQVAQAVRKTLAEYEDLKDIIAMLGLEELAQNERQTVYRARRLERFLTQPFFTTEQFSGIPGKMVSLDQTLTGCEAILDDKCSGLSEQALYMIGAVDEAELEHQEREAQEVEEIGQ.

Position 135-142 (135-142 (GGAGVGKT)) interacts with ATP.

It belongs to the ATPase alpha/beta chains family. F-type ATPases have 2 components, CF(1) - the catalytic core - and CF(0) - the membrane proton channel. CF(1) has five subunits: alpha(3), beta(3), gamma(1), delta(1), epsilon(1). CF(0) has four main subunits: a(1), b(1), b'(1) and c(9-12).

It localises to the cellular thylakoid membrane. The enzyme catalyses ATP + H2O + 4 H(+)(in) = ADP + phosphate + 5 H(+)(out). In terms of biological role, produces ATP from ADP in the presence of a proton gradient across the membrane. The catalytic sites are hosted primarily by the beta subunits. The polypeptide is ATP synthase subunit beta (atpD) (Acaryochloris marina (strain MBIC 11017)).